The following is a 268-amino-acid chain: Ribosomal RNA large subunit methyltransferase E (268 aa).

S-adenosyl-L-methionine-binding residues include Gly50, Trp52, Asp68, Asp84, and Asp109. Lys149 (proton acceptor) is an active-site residue. One can recognise a TRAM domain in the interval 196 to 254 (PLRKGDKFVVDIEKLGSSGDGAVLIEGFVVFVKEVEVGEKVRIKISDVKPNFAFADVEE).

This sequence belongs to the class I-like SAM-binding methyltransferase superfamily. RNA methyltransferase RlmE family.

The protein localises to the cytoplasm. It carries out the reaction uridine(2552) in 23S rRNA + S-adenosyl-L-methionine = 2'-O-methyluridine(2552) in 23S rRNA + S-adenosyl-L-homocysteine + H(+). Specifically methylates the uridine in position 2552 of 23S rRNA at the 2'-O position of the ribose in the fully assembled 50S ribosomal subunit. The polypeptide is Ribosomal RNA large subunit methyltransferase E (Methanosarcina mazei (strain ATCC BAA-159 / DSM 3647 / Goe1 / Go1 / JCM 11833 / OCM 88) (Methanosarcina frisia)).